Consider the following 2197-residue polypeptide: Protein sickie (2197 aa).

The Calponin-homology (CH) domain occupies 21–129 (RDYAEIYTDW…LFFALSRFKQ (109 aa)). Disordered stretches follow at residues 165–197 (GLRT…QLAQ), 235–311 (CPPD…PQKH), 331–646 (AASV…NKFH), 730–767 (GSSP…SPGK), 788–910 (RNSR…FGYV), 1094–1119 (GPGQ…NRSN), and 1202–1223 (TAAG…GLVG). A compositionally biased stretch (low complexity) spans 175–197 (QDKNQQEQQQQQQQQQTPQQLAQ). Over residues 261–290 (SDFNTSRPNSPPTSNHTIQSLKSGNNNSLR) the composition is skewed to polar residues. Positions 291-304 (PPSIKSGIPSPSSP) are enriched in low complexity. A compositionally biased stretch (polar residues) spans 331-341 (AASVASKTQIQ). 2 stretches are compositionally biased toward low complexity: residues 342 to 354 (SKRT…FSSA) and 379 to 398 (SVSS…LAAQ). A compositionally biased stretch (basic and acidic residues) spans 399 to 428 (QKKEQANKATKLDKKEKSPARSLNKEESGN). Polar residues-rich tracts occupy residues 429-441 (ESRS…TGKS), 561-570 (ANSQPTSHIS), 577-588 (EPSTPQHSSGIY), and 633-644 (SAPNTPTASPNK). 3 stretches are compositionally biased toward low complexity: residues 755-766 (GPSSSAGGISPG), 796-831 (SIGT…NNNN), and 887-904 (SSSK…KGVP). Positions 1100-1119 (GQMSGNESPYVQSPRMNRSN) are enriched in polar residues. Residues 1262–1342 (YGNAEERQAH…RQTIELLRKQ (81 aa)) are a coiled coil. 2 disordered regions span residues 1373–1415 (QALG…SMCS) and 1455–1511 (KTSR…SPAK). 2 stretches are compositionally biased toward polar residues: residues 1379 to 1399 (GSDQ…NNGS) and 1406 to 1415 (RQHSTDSMCS). Positions 1455–1468 (KTSRHVGHHHHHNH) are enriched in basic residues. Residues 1556-1591 (SSASQLESLKEMMNKMRAEMMSLKHNNERLQKLVTT) are a coiled coil. 3 disordered regions span residues 1600–1633 (SLGQ…PPME), 1648–1690 (CLPP…EAAP), and 2172–2197 (SEAQ…AGAE). The segment covering 1603–1616 (QAISPNGSVAGSSE) has biased composition (polar residues). Positions 1650–1663 (PPAPAPEQPPPPAP) are enriched in pro residues. A compositionally biased stretch (polar residues) spans 2184–2197 (LDSNVTPESSAGAE).

This sequence belongs to the Nav/unc-53 family.

Functionally, required for the immune deficiency pathway, which mediates responses to Gram-negative bacterial infection. Favors Rel activation and nuclear translocation. The chain is Protein sickie (sick) from Drosophila melanogaster (Fruit fly).